The chain runs to 519 residues: 2-isopropylmalate synthase (519 aa).

A Pyruvate carboxyltransferase domain is found at 5 to 267 (VIIFDTTLRD…QTRINHKEIY (263 aa)). Residues Asp14, His202, His204, and Asn238 each coordinate Mn(2+). The regulatory domain stretch occupies residues 392 to 519 (VMNYFNTQSG…RKHHTTQEAV (128 aa)).

The protein belongs to the alpha-IPM synthase/homocitrate synthase family. LeuA type 1 subfamily. As to quaternary structure, homodimer. Mn(2+) is required as a cofactor.

Its subcellular location is the cytoplasm. The catalysed reaction is 3-methyl-2-oxobutanoate + acetyl-CoA + H2O = (2S)-2-isopropylmalate + CoA + H(+). It functions in the pathway amino-acid biosynthesis; L-leucine biosynthesis; L-leucine from 3-methyl-2-oxobutanoate: step 1/4. Catalyzes the condensation of the acetyl group of acetyl-CoA with 3-methyl-2-oxobutanoate (2-ketoisovalerate) to form 3-carboxy-3-hydroxy-4-methylpentanoate (2-isopropylmalate). This Proteus mirabilis (strain HI4320) protein is 2-isopropylmalate synthase.